Consider the following 210-residue polypeptide: Cytochrome c biogenesis ATP-binding export protein CcmA (210 aa).

The 203-residue stretch at 3-205 (LHLQAAGLAC…KPSGYRELNL (203 aa)) folds into the ABC transporter domain. ATP is bound at residue 37–44 (GPNGSGKT).

It belongs to the ABC transporter superfamily. CcmA exporter (TC 3.A.1.107) family. The complex is composed of two ATP-binding proteins (CcmA) and two transmembrane proteins (CcmB).

The protein localises to the cell inner membrane. The enzyme catalyses heme b(in) + ATP + H2O = heme b(out) + ADP + phosphate + H(+). Part of the ABC transporter complex CcmAB involved in the biogenesis of c-type cytochromes; once thought to export heme, this seems not to be the case, but its exact role is uncertain. Responsible for energy coupling to the transport system. This Pseudomonas putida (strain ATCC 47054 / DSM 6125 / CFBP 8728 / NCIMB 11950 / KT2440) protein is Cytochrome c biogenesis ATP-binding export protein CcmA.